We begin with the raw amino-acid sequence, 357 residues long: DNA primase small subunit PriS (357 aa).

Residues Asp105, Asp107, and Asp259 contribute to the active site.

The protein belongs to the eukaryotic-type primase small subunit family. As to quaternary structure, heterodimer of a small subunit (PriS) and a large subunit (PriL). Mg(2+) is required as a cofactor. Requires Mn(2+) as cofactor.

Catalytic subunit of DNA primase, an RNA polymerase that catalyzes the synthesis of short RNA molecules used as primers for DNA polymerase during DNA replication. The small subunit contains the primase catalytic core and has DNA synthesis activity on its own. Binding to the large subunit stabilizes and modulates the activity, increasing the rate of DNA synthesis while decreasing the length of the DNA fragments, and conferring RNA synthesis capability. The DNA polymerase activity may enable DNA primase to also catalyze primer extension after primer synthesis. May also play a role in DNA repair. The chain is DNA primase small subunit PriS from Methanococcus maripaludis (strain C5 / ATCC BAA-1333).